Consider the following 902-residue polypeptide: Gamma-tubulin complex component 2 (902 aa).

Y83 is modified (phosphotyrosine). The interval 874–902 (AERSQKATPQVPVLRGPPAPAPRVAVTAQ) is disordered.

This sequence belongs to the TUBGCP family. As to quaternary structure, component of the gamma-tubulin ring complex (gTuRC) consisting of TUBGCP2, TUBGCP3, TUBGCP4, TUBGCP5 and TUBGCP6 and gamma-tubulin TUBG1 or TUBG2. TUBGCP2, TUBGCP3, TUBGCP4, TUBGCP5 and TUBGCP6 assemble in a 5:5:2:1:1 stoichiometry; each is associated with a gamma-tubulin, thereby arranging 14 gamma-tubulins in a helical manner. Gamma-tubulin at the first position is blocked by TUBGCP3 at the last position, allowing 13 protafilaments to grow into a microtubule. The gTuRC (via TUBGCP3 and TUBGCP6) interacts with ACTB and MZT1; the interactions form a luminal bridge that stabilizes the initial structure during complex assembly. The gTuRC (via TUBGCP2) interacts with MZT2A/MZT2B and CDK5RAP2 (via CM1 motif); the interactions play a role in gTuRC activation. Interacts with ATF5; the ATF5:PCNT:polyglutamylated tubulin (PGT) tripartite unites the mother centriole and the pericentriolar material (PCM) in the centrosome. As to expression, ubiquitously expressed.

It localises to the cytoplasm. The protein resides in the cytoskeleton. Its subcellular location is the microtubule organizing center. The protein localises to the centrosome. Component of the gamma-tubulin ring complex (gTuRC) which mediates microtubule nucleation. The gTuRC regulates the minus-end nucleation of alpha-beta tubulin heterodimers that grow into microtubule protafilaments, a critical step in centrosome duplication and spindle formation. Plays a role in neuronal migration. This Homo sapiens (Human) protein is Gamma-tubulin complex component 2 (TUBGCP2).